A 361-amino-acid chain; its full sequence is uncharacterized protein (361 aa).

WD repeat units lie at residues 57–96 (RHKKSCRNISVNESGTEFISVGSDGVLKIADTSTGRVSSK), 103–142 (KEISPYSVVQWIENDMVFATGDDNGCVSVWDKRTEGGIIH), 146–184 (DHIDYISSISPFEERYFVATSGDGVLSVIDARNFKKPIL), 187–229 (EQDE…DHTD), 237–275 (SHDFSIETITRADSDSLYVGGSDGCIRLLHILPNKYERI), and 280–318 (SSRSTVDAVDVTTEGNFLVSCSGTELAFWPVDQKEGDES). Residues 311–361 (DQKEGDESSSSDNLDSDEDSSSDSEFSSPKKKKKVGNQGKKPLGTDFFDGL) are disordered.

The protein localises to the nucleus. It is found in the nucleolus. This is an uncharacterized protein from Schizosaccharomyces pombe (strain 972 / ATCC 24843) (Fission yeast).